A 168-amino-acid chain; its full sequence is CASP-like protein 4D1 (168 aa).

Residues 1–11 (MAPPPPSLASR) lie on the Cytoplasmic side of the membrane. Residues 12–32 (MAALILRILTFIFLIASLVIL) traverse the membrane as a helical segment. At 33–57 (TTNTATLELDLVEVKVHFKDVYAYR) the chain is on the extracellular side. A helical transmembrane segment spans residues 58 to 78 (YMLATIVIGLAYTVLQIAFTL). Residues 79–97 (YYVATGNRMMSGDGNLAFD) lie on the Cytoplasmic side of the membrane. A helical membrane pass occupies residues 98–118 (FFGDKVISYILVTGAAAGFAS). Residues 119-144 (TKDIKPVFSGSGDFDAFINKGYASAS) lie on the Extracellular side of the membrane. A helical membrane pass occupies residues 145–165 (LLLIGFVCTAVLSVFSSYALP). Over 166–168 (KQV) the chain is Cytoplasmic.

This sequence belongs to the Casparian strip membrane proteins (CASP) family. As to quaternary structure, homodimer and heterodimers.

Its subcellular location is the cell membrane. This chain is CASP-like protein 4D1, found in Ricinus communis (Castor bean).